The chain runs to 288 residues: UPF0276 protein VP3015 (288 aa).

The protein belongs to the UPF0276 family.

This chain is UPF0276 protein VP3015, found in Vibrio parahaemolyticus serotype O3:K6 (strain RIMD 2210633).